The following is a 424-amino-acid chain: L-glutamine:2-deoxy-scyllo-inosose aminotransferase (424 aa).

Lys202 bears the N6-(pyridoxal phosphate)lysine mark.

It belongs to the DegT/DnrJ/EryC1 family. L-glutamine:2-deoxy-scyllo-inosose/scyllo-inosose aminotransferase subfamily. Pyridoxal 5'-phosphate is required as a cofactor.

The catalysed reaction is 2-deoxy-L-scyllo-inosose + L-glutamine = 2-deoxy-scyllo-inosamine + 2-oxoglutaramate. It carries out the reaction 3-amino-2,3-dideoxy-scyllo-inosose + L-glutamine = 2-deoxystreptamine + 2-oxoglutaramate. The protein operates within metabolic intermediate biosynthesis; 2-deoxystreptamine biosynthesis; 2-deoxystreptamine from D-glucose 6-phosphate: step 2/4. It functions in the pathway metabolic intermediate biosynthesis; 2-deoxystreptamine biosynthesis; 2-deoxystreptamine from D-glucose 6-phosphate: step 4/4. Its pathway is antibiotic biosynthesis; neomycin biosynthesis. Its function is as follows. Catalyzes the PLP-dependent transamination of 2-deoxy-scyllo-inosose (2-DOI) to form 2-deoxy-scyllo-inosamine (2-DOIA) using L-glutamine as the amino donor. Also catalyzes the transamination of 3-amino-2,3-dideoxy-scyllo-inosose (keto-2-DOIA) into 2-deoxystreptamine (2-DOS). This chain is L-glutamine:2-deoxy-scyllo-inosose aminotransferase (neoB), found in Streptomyces fradiae (Streptomyces roseoflavus).